The primary structure comprises 436 residues: Trigger factor (436 aa).

In terms of domain architecture, PPIase FKBP-type spans 161–246 (GDQLNIDFVG…VNSVSEAELP (86 aa)).

This sequence belongs to the FKBP-type PPIase family. Tig subfamily.

The protein localises to the cytoplasm. It catalyses the reaction [protein]-peptidylproline (omega=180) = [protein]-peptidylproline (omega=0). Functionally, involved in protein export. Acts as a chaperone by maintaining the newly synthesized protein in an open conformation. Functions as a peptidyl-prolyl cis-trans isomerase. The polypeptide is Trigger factor (Azotobacter vinelandii (strain DJ / ATCC BAA-1303)).